Here is a 368-residue protein sequence, read N- to C-terminus: F-box only protein 28 (368 aa).

Over residues 1–11 (MAAAAEERMAE) the composition is skewed to basic and acidic residues. The disordered stretch occupies residues 1–56 (MAAAAEERMAEEGGGGQGDGGSSLASGSTQRQPPPPAPQHPQPGSQALPAPALAPD). Over residues 12 to 21 (EGGGGQGDGG) the composition is skewed to gly residues. Low complexity predominate over residues 22-31 (SSLASGSTQR). Residues 32–41 (QPPPPAPQHP) show a composition bias toward pro residues. The span at 42 to 56 (QPGSQALPAPALAPD) shows a compositional bias: low complexity. In terms of domain architecture, F-box spans 61-109 (NNTLVALPIVAIENILSFMSYDEISQLRLVCKRMDLVCQRMLNQGFLKV). 2 positions are modified to phosphoserine: Ser-235 and Ser-242. Phosphothreonine is present on Thr-270. The tract at residues 328 to 368 (MESAVGNSSGSGQNEESPRKRKKATEAIDSLRKSKRLRNRK) is disordered. A compositionally biased stretch (low complexity) spans 333–342 (GNSSGSGQNE). Phosphoserine is present on Ser-344.

In terms of assembly, part of a SCF (SKP1-cullin-F-box) protein ligase complex.

It is found in the chromosome. Its subcellular location is the centromere. The protein localises to the kinetochore. In terms of biological role, probably recognizes and binds to some phosphorylated proteins and promotes their ubiquitination and degradation. This chain is F-box only protein 28 (FBXO28), found in Homo sapiens (Human).